Consider the following 501-residue polypeptide: Cytochrome P450 2J6 (501 aa).

C447 provides a ligand contact to heme.

Belongs to the cytochrome P450 family. It depends on heme as a cofactor.

It is found in the endoplasmic reticulum membrane. The protein resides in the microsome membrane. It carries out the reaction an organic molecule + reduced [NADPH--hemoprotein reductase] + O2 = an alcohol + oxidized [NADPH--hemoprotein reductase] + H2O + H(+). This Mus musculus (Mouse) protein is Cytochrome P450 2J6 (Cyp2j6).